The sequence spans 840 residues: Axin-2 (840 aa).

Residues 1–75 (MSSAVLVTLL…EGRASPDSPL (75 aa)) form a disordered region. The Tankyrase-binding motif motif lies at 21–30 (APRPPVPGEE). Over residues 42-55 (KVQSTKPMPVSSNA) the composition is skewed to polar residues. The span at 56-69 (RRNEDGLGEPEGRA) shows a compositional bias: basic and acidic residues. In terms of domain architecture, RGS spans 81 to 200 (SLHSLLGDQD…LTSDIYLEYV (120 aa)). Disordered stretches follow at residues 300 to 363 (SELS…KEMT), 398 to 435 (IREDEEKEGSEQALSSRDGAPVQHPLALLPSGSYEEDP), 447 to 485 (LKTPGCQSPGVGRYSPRSRSPDHHHQHHHHQQCHTLLPT), 572 to 614 (RGGT…GDRS), and 715 to 745 (ASQQRDRNHSAAGQAGASPFANPSLAPEDHK). Positions 303–318 (SSDALTDDSMSMTDSS) are enriched in low complexity. An interaction with GSK3B region spans residues 327–413 (MGSKKQLQRE…KEGSEQALSS (87 aa)). The interval 413–478 (SRDGAPVQHP…HHHQHHHHQQ (66 aa)) is interaction with beta-catenin. Residues 468–478 (DHHHQHHHHQQ) show a composition bias toward basic residues. The DIX domain maps to 758–840 (ASELVVTYFF…RILGKVERID (83 aa)).

In terms of assembly, interacts with glycogen synthase kinase-3 beta (GSK3B) and beta-catenin. The interaction between axin and beta-catenin occurs via the armadillo repeats contained in beta-catenin. Interacts with SMAD7 and RNF111. Interacts with ANKRD6. Interacts with SIAH1. Interacts with SIAH2. In terms of processing, ADP-ribosylated by tankyrase TNKS and TNKS2. Poly-ADP-ribosylated protein is recognized by RNF146, followed by ubiquitination and subsequent activation of the Wnt signaling pathway. Ubiquitinated by RNF146 when poly-ADP-ribosylated, leading to its degradation and subsequent activation of the Wnt signaling pathway. Deubiquitinated by USP34, deubiquitinated downstream of beta-catenin stabilization step: deubiquitination is important Wnt signaling to positively regulate beta-catenin (CTNBB1)-mediated transcription. Post-translationally, probably phosphorylated by GSK3B and dephosphorylated by PP2A. As to expression, expressed in Tcf7-positive innate-like T-cells (at protein level).

It localises to the cytoplasm. Functionally, inhibitor of the Wnt signaling pathway. Down-regulates beta-catenin. Probably facilitate the phosphorylation of beta-catenin and APC by GSK3B. The chain is Axin-2 from Mus musculus (Mouse).